Consider the following 556-residue polypeptide: MLNLCHALRGVRQFSCSVIVKVKCASCSIKLQDQDPSKPGYYTKPKSLPDSKLNPDLQDLKYLLFSQDIQLSKQAIQNDPDLKTKRDLLLRVICKRCSNALHHNNYNPEEFPESTLNDILNYVPRGSNVMHIVPFVEFPLHLDPNVLKRNDLDTTLVLTKSDQVFKDKNAVSKKVPIFMKQFLKNTLRIDSNKTFAISALKNWNISMFYNYFKNYTYLLGNPNVGKSTLINTLLQKYLGYKVKIDSTGKINSPSEEVMQEAFTNPKNFFKIQAAGVSHIPNLTRSVQAYQVGGKILFDLPGYSTSTSRLRLEEPIDERWLQRLRKTDLFNRKHIKQKTYESMKGTSQGGCYTVGGIFYLVPPKGSINQIVKYIPGPSKTFKNIEKGIDVFNSCNSSSGTHPLSRYCGIKSVICEKSQYKRYAIPPFIGSIEIVLKDIGYILLRTTGRYEFKGLHEIWIPRGIQVGIREPLENLIESGYRRYIETNGKESSCPRDRPIISSLYEMAPDEADTLNAVKKSYLEKTEKDLSARRFVDDDPYDLVQHLXKKKNPYWYYQW.

A mitochondrion-targeting transit peptide spans M1–K21. The 193-residue stretch at E113–S305 folds into the CP-type G domain.

It belongs to the TRAFAC class YlqF/YawG GTPase family. GEP3 subfamily.

It localises to the mitochondrion. Its function is as follows. Interacts genetically with prohibitins and thus may be involved in the mitochondrial lipid metabolism. This is Genetic interactor of prohibitins 3, mitochondrial (GEP3) from Saccharomyces cerevisiae (strain Zymaflore VL3) (Baker's yeast).